A 465-amino-acid polypeptide reads, in one-letter code: Pleckstrin homology domain-containing family S member 1 (465 aa).

Residues 14 to 129 (EVCKQDYFIK…WVSFMSSFRQ (116 aa)) form the PH domain. Residues 159–173 (PSSTSEAVGSSSPRN) are compositionally biased toward polar residues. Disordered regions lie at residues 159 to 179 (PSSTSEAVGSSSPRNGLQDKH) and 258 to 283 (ETSHESVDSSKEEPQTLPETQDGDLH). The segment covering 258 to 271 (ETSHESVDSSKEEP) has biased composition (basic and acidic residues).

The polypeptide is Pleckstrin homology domain-containing family S member 1 (Homo sapiens (Human)).